The primary structure comprises 366 residues: N-glycosylation protein EOS1 (366 aa).

Residues methionine 1–tyrosine 136 lie on the Lumenal side of the membrane. Residues asparagine 103 and asparagine 104 are each glycosylated (N-linked (GlcNAc...) asparagine). The chain crosses the membrane as a helical span at residues leucine 137–leucine 157. Over methionine 158–threonine 167 the chain is Cytoplasmic. Residues valine 168–leucine 188 form a helical membrane-spanning segment. Over leucine 189–glutamate 195 the chain is Lumenal. Residues leucine 196–tryptophan 216 form a helical membrane-spanning segment. At glutamine 217–lysine 321 the chain is on the cytoplasmic side. A compositionally biased stretch (acidic residues) spans glutamate 233 to glutamate 256. Residues glutamate 233–proline 305 form a disordered region. Residues serine 272–leucine 284 are compositionally biased toward low complexity. The chain crosses the membrane as a helical span at residues isoleucine 322–leucine 342. At arginine 343–alanine 366 the chain is on the lumenal side.

Belongs to the EOS1 family. In terms of processing, N-glycosylated.

The protein localises to the endoplasmic reticulum membrane. Its function is as follows. Involved in oxidative stress resistance and N-glycosylation. This Saccharomyces cerevisiae (strain ATCC 204508 / S288c) (Baker's yeast) protein is N-glycosylation protein EOS1 (EOS1).